An 858-amino-acid polypeptide reads, in one-letter code: MDLSSDQLVMKIVEMGFEKLDALEAVKAVGGKSCDDAVEYILKGNHRTGGFKPASLLCSSGSNKILGKRAMPSSFSSSESKRQSSLLDHFRSVNQNKKKGDTFGTVEVDSQLETVSEHSEEVRKSLAPVFMESSCFPEGQLLNGCSEASSSWEKRVNSILRNRFGISSLRSFQREALSTWVAHKDCLVLAATGSGKSLCFQIPALLTGKVVVVISPLISLMHDQCLKLSRHKVSACFLGSGQLDNCIEEKAMQGMYQIIYVCPETVVRLIKPLQKLAKTHGIALFAIDEAHCVSKWGHDFRPHYRKLSVLRENFCASNLEFLEYDVPIMALTATATVNVQEDILESLHLSKETKIVLTSFFRPNLQFSVKHSRTKFASSYAKDFQNLVDLYSEKKNSTGKKLAVISRESEEQTDFGSHDSENIHETDYDEDEEDQENSLAKKNSSNGKELSEAYLEDETDIFQSVDDWDVACGEFCAMPSCELLEIPVPSEKQKDLEGLTIIYVPTRKESVNIAKYLCGVGLKAAAYNASLPKKHLRQVHQDFHDNKLQVVVATIAFGMGIDKKNVRKIIHYGWLQSLEAYYQEAGRAGRDGELAECVLYADLSRAPTLLPSRRSKEQTEQAYKMLSDCFRYGMNTSQCRAKILVEYFGEEFSSKKCNSCDVCTEGPPELVDVREEANLLFQVITAFHLQVDNDSEHAPYEDYGLGNSKQNKLSHKPNLLFFISKLREQCEKFKETDCLWWKGLARIMEAEGYIKEMDNKDRRVEIKFIQPTEKGKKQLDFQDDKPLYVYPEADMLLSLKQDRTYSGFSEWGKGWADPEIRRQRLERRERKPRRERKPRKKRTRGRSSTKLHPWRSKE.

The UBA domain occupies 2-44 (DLSSDQLVMKIVEMGFEKLDALEAVKAVGGKSCDDAVEYILKG). In terms of domain architecture, Helicase ATP-binding spans 177 to 353 (LSTWVAHKDC…LESLHLSKET (177 aa)). ATP is bound at residue 190-197 (AATGSGKS). A DEAH box motif is present at residues 288 to 291 (DEAH). The interval 402–450 (LAVISRESEEQTDFGSHDSENIHETDYDEDEEDQENSLAKKNSSNGKEL) is disordered. The segment covering 416-426 (GSHDSENIHET) has biased composition (basic and acidic residues). Over residues 427-436 (DYDEDEEDQE) the composition is skewed to acidic residues. Residues 437 to 448 (NSLAKKNSSNGK) show a composition bias toward polar residues. Residues 491–627 (EKQKDLEGLT…QTEQAYKMLS (137 aa)) enclose the Helicase C-terminal domain. The segment at 822-858 (RQRLERRERKPRRERKPRKKRTRGRSSTKLHPWRSKE) is disordered. A compositionally biased stretch (basic residues) spans 830-858 (RKPRRERKPRKKRTRGRSSTKLHPWRSKE).

It belongs to the helicase family. RecQ subfamily. Mg(2+) is required as a cofactor. Mn(2+) serves as cofactor. Mostly expressed in roots and seedlings, and, to a lower extent, in leaves, shoots, shoot apical mersitem, inflorescences, flowers, siliques and seeds.

The protein resides in the nucleus. It carries out the reaction Couples ATP hydrolysis with the unwinding of duplex DNA by translocating in the 3'-5' direction.. It catalyses the reaction ATP + H2O = ADP + phosphate + H(+). Functionally, plant specific, probable 3'-5' DNA helicase that may play a role in the repair of DNA. This Arabidopsis thaliana (Mouse-ear cress) protein is ATP-dependent DNA helicase Q-like SIM (RECQSIM).